Reading from the N-terminus, the 375-residue chain is Succinyl-diaminopimelate desuccinylase (375 aa).

His66 serves as a coordination point for Zn(2+). Asp68 is a catalytic residue. Asp99 contacts Zn(2+). Residue Glu133 is the Proton acceptor of the active site. Zn(2+) is bound by residues Glu134, Glu162, and His348.

The protein belongs to the peptidase M20A family. DapE subfamily. Homodimer. Zn(2+) serves as cofactor. It depends on Co(2+) as a cofactor.

The enzyme catalyses N-succinyl-(2S,6S)-2,6-diaminopimelate + H2O = (2S,6S)-2,6-diaminopimelate + succinate. It functions in the pathway amino-acid biosynthesis; L-lysine biosynthesis via DAP pathway; LL-2,6-diaminopimelate from (S)-tetrahydrodipicolinate (succinylase route): step 3/3. Functionally, catalyzes the hydrolysis of N-succinyl-L,L-diaminopimelic acid (SDAP), forming succinate and LL-2,6-diaminopimelate (DAP), an intermediate involved in the bacterial biosynthesis of lysine and meso-diaminopimelic acid, an essential component of bacterial cell walls. The chain is Succinyl-diaminopimelate desuccinylase from Escherichia coli O7:K1 (strain IAI39 / ExPEC).